The sequence spans 137 residues: Large ribosomal subunit protein uL16 (137 aa).

This sequence belongs to the universal ribosomal protein uL16 family. In terms of assembly, part of the 50S ribosomal subunit.

Binds 23S rRNA and is also seen to make contacts with the A and possibly P site tRNAs. The chain is Large ribosomal subunit protein uL16 from Acinetobacter baylyi (strain ATCC 33305 / BD413 / ADP1).